The primary structure comprises 342 residues: Probable dual-specificity RNA methyltransferase RlmN (342 aa).

E91 (proton acceptor) is an active-site residue. A Radical SAM core domain is found at 97-327 (YKHGNSICVS…TTIRREMGAD (231 aa)). A disulfide bond links C104 and C332. Residues C111, C115, and C118 each contribute to the [4Fe-4S] cluster site. S-adenosyl-L-methionine contacts are provided by residues 158 to 159 (GE), S190, 213 to 215 (SLH), and N289. C332 acts as the S-methylcysteine intermediate in catalysis.

This sequence belongs to the radical SAM superfamily. RlmN family. It depends on [4Fe-4S] cluster as a cofactor.

Its subcellular location is the cytoplasm. The catalysed reaction is adenosine(2503) in 23S rRNA + 2 reduced [2Fe-2S]-[ferredoxin] + 2 S-adenosyl-L-methionine = 2-methyladenosine(2503) in 23S rRNA + 5'-deoxyadenosine + L-methionine + 2 oxidized [2Fe-2S]-[ferredoxin] + S-adenosyl-L-homocysteine. It catalyses the reaction adenosine(37) in tRNA + 2 reduced [2Fe-2S]-[ferredoxin] + 2 S-adenosyl-L-methionine = 2-methyladenosine(37) in tRNA + 5'-deoxyadenosine + L-methionine + 2 oxidized [2Fe-2S]-[ferredoxin] + S-adenosyl-L-homocysteine. In terms of biological role, specifically methylates position 2 of adenine 2503 in 23S rRNA and position 2 of adenine 37 in tRNAs. The protein is Probable dual-specificity RNA methyltransferase RlmN of Clostridium botulinum (strain Okra / Type B1).